Consider the following 494-residue polypeptide: MPTTSSTATHDVVLIGGGIMSATLGVLLQKLEPTWSIALYENLDQAGLESSDPWNNAGTGHAALCELNYSPMDKNGRVDVTKALGINEQFWITRQFWSSLVVDGTLKDPKSFINPLPHMSFVWGDDHADYLRARYEAMSAQPVFAGMEHSEDPEQIRAWAPLLIEGRESGQRLAASRHTGGTDVDFGSLTRQLVTAMAGAGAEVRFGHKVTGLTRGTDGRWEVKVKNKAAGSEVVDRARFVFVGAGGGALPLLQKSGIPEIKGFGGFPVSGQFLRCTDESVVNQHMAKVYGQAAVGAPPMSVPHLDTRFVNGKRSLLFGPYAGFSTNFLKTGSYLDLPLSVRPHNLTTMLDVAKDNVDLTKYLVTEVLKSRDKKIDALHEFYPEADGGEWELITAGQRVQVMKRKGRFGGVLQFGTEVVTHADGSLGGLLGASPGASTAAPIMVKLLERCFPAKTAGWDGTLKELIPSLGHTLNDDPALLDEVRTVTDAALKLA.

It belongs to the MQO family. It depends on FAD as a cofactor.

It carries out the reaction (S)-malate + a quinone = a quinol + oxaloacetate. It participates in carbohydrate metabolism; tricarboxylic acid cycle; oxaloacetate from (S)-malate (quinone route): step 1/1. The polypeptide is Probable malate:quinone oxidoreductase (Micrococcus luteus (strain ATCC 4698 / DSM 20030 / JCM 1464 / CCM 169 / CCUG 5858 / IAM 1056 / NBRC 3333 / NCIMB 9278 / NCTC 2665 / VKM Ac-2230) (Micrococcus lysodeikticus)).